A 308-amino-acid polypeptide reads, in one-letter code: Protein UL135 (308 aa).

The signal sequence occupies residues 1-22 (MVWLWLGVGLLGGTGLASLVLA). The disordered stretch occupies residues 105–274 (KPEFPPARFE…TEPTTLPIVS (170 aa)). The segment covering 126–145 (SIGRSPSHCSSSSSLSSSAS) has biased composition (low complexity). 2 stretches are compositionally biased toward pro residues: residues 152–163 (QPPPSWKPPPPP) and 219–238 (PVTP…PRNP).

Belongs to the HCMV UL135 family. As to quaternary structure, interacts with host components of the WAVE2 complex ABI1, NAP1 and WAVE2. Also interacts with host ABI2 and TLN1.

It localises to the host cell membrane. Its subcellular location is the host Golgi apparatus. Its function is as follows. Remodels the host actin cytoskeleton in order to impair immune recognition of infected cells. Mechanistically, interacts with members of the host WAVE2 complex and redirects the complex to the plasma membrane. In turn, the efficiency of immune synapse formation is greatly reduced. This chain is Protein UL135 (UL135), found in Human cytomegalovirus (strain Merlin) (HHV-5).